A 503-amino-acid chain; its full sequence is Glycerol kinase (503 aa).

Residue T14 coordinates ADP. Residues T14, T15, and S16 each contribute to the ATP site. T14 contributes to the sn-glycerol 3-phosphate binding site. R18 contacts ADP. 4 residues coordinate sn-glycerol 3-phosphate: R84, E85, Y136, and D246. R84, E85, Y136, D246, and Q247 together coordinate glycerol. Positions 268 and 311 each coordinate ADP. ATP-binding residues include T268, G311, Q315, and G412. ADP contacts are provided by G412 and N416. Over residues 468–481 (ERTFSPDSDNEKRE) the composition is skewed to basic and acidic residues. The disordered stretch occupies residues 468–489 (ERTFSPDSDNEKRERRYKGWKK).

Belongs to the FGGY kinase family.

It catalyses the reaction glycerol + ATP = sn-glycerol 3-phosphate + ADP + H(+). The protein operates within polyol metabolism; glycerol degradation via glycerol kinase pathway; sn-glycerol 3-phosphate from glycerol: step 1/1. Its activity is regulated as follows. Inhibited by fructose 1,6-bisphosphate (FBP). Its function is as follows. Key enzyme in the regulation of glycerol uptake and metabolism. Catalyzes the phosphorylation of glycerol to yield sn-glycerol 3-phosphate. This chain is Glycerol kinase, found in Haemophilus influenzae (strain ATCC 51907 / DSM 11121 / KW20 / Rd).